The primary structure comprises 44 residues: Benzaldehyde dehydrogenase [NAD(+)] II (44 aa).

This sequence belongs to the aldehyde dehydrogenase family.

It carries out the reaction benzaldehyde + NAD(+) + H2O = benzoate + NADH + 2 H(+). This Acinetobacter guillouiae (Acinetobacter genomosp. 11) protein is Benzaldehyde dehydrogenase [NAD(+)] II.